Consider the following 71-residue polypeptide: ATP synthase subunit c 1 (71 aa).

Transmembrane regions (helical) follow at residues 4–24 (FIGA…VGHV) and 46–66 (LFVG…IALL).

It belongs to the ATPase C chain family. As to quaternary structure, F-type ATPases have 2 components, F(1) - the catalytic core - and F(0) - the membrane proton channel. F(1) has five subunits: alpha(3), beta(3), gamma(1), delta(1), epsilon(1). F(0) has four main subunits: a(1), b(1), b'(1) and c(10-14). The alpha and beta chains form an alternating ring which encloses part of the gamma chain. F(1) is attached to F(0) by a central stalk formed by the gamma and epsilon chains, while a peripheral stalk is formed by the delta, b and b' chains.

Its subcellular location is the cell inner membrane. In terms of biological role, f(1)F(0) ATP synthase produces ATP from ADP in the presence of a proton or sodium gradient. F-type ATPases consist of two structural domains, F(1) containing the extramembraneous catalytic core and F(0) containing the membrane proton channel, linked together by a central stalk and a peripheral stalk. During catalysis, ATP synthesis in the catalytic domain of F(1) is coupled via a rotary mechanism of the central stalk subunits to proton translocation. Functionally, key component of the F(0) channel; it plays a direct role in translocation across the membrane. A homomeric c-ring of between 10-14 subunits forms the central stalk rotor element with the F(1) delta and epsilon subunits. The polypeptide is ATP synthase subunit c 1 (Cereibacter sphaeroides (strain ATCC 17029 / ATH 2.4.9) (Rhodobacter sphaeroides)).